The chain runs to 489 residues: UDP-N-acetylmuramate--L-alanine ligase (489 aa).

128–134 (GTHGKTT) is an ATP binding site.

It belongs to the MurCDEF family.

It is found in the cytoplasm. The catalysed reaction is UDP-N-acetyl-alpha-D-muramate + L-alanine + ATP = UDP-N-acetyl-alpha-D-muramoyl-L-alanine + ADP + phosphate + H(+). It functions in the pathway cell wall biogenesis; peptidoglycan biosynthesis. Functionally, cell wall formation. In Shewanella sediminis (strain HAW-EB3), this protein is UDP-N-acetylmuramate--L-alanine ligase.